We begin with the raw amino-acid sequence, 126 residues long: Fluoride-specific ion channel FluC (126 aa).

Helical transmembrane passes span 33-53, 64-84, and 96-116; these read LPLN…VFIV, YSLF…SFAL, and GALA…LIGG. The Na(+) site is built by Gly-74 and Thr-77.

This sequence belongs to the fluoride channel Fluc/FEX (TC 1.A.43) family.

It is found in the cell membrane. It catalyses the reaction fluoride(in) = fluoride(out). Na(+) is not transported, but it plays an essential structural role and its presence is essential for fluoride channel function. Its function is as follows. Fluoride-specific ion channel. Important for reducing fluoride concentration in the cell, thus reducing its toxicity. In Nitrosopumilus maritimus (strain SCM1), this protein is Fluoride-specific ion channel FluC.